A 261-amino-acid polypeptide reads, in one-letter code: Small ribosomal subunit protein uS2 (261 aa).

Belongs to the universal ribosomal protein uS2 family.

This Rhodospirillum centenum (strain ATCC 51521 / SW) protein is Small ribosomal subunit protein uS2.